Consider the following 328-residue polypeptide: Beta-ketoacyl-[acyl-carrier-protein] synthase III (328 aa).

Residues C122 and H255 contribute to the active site. An ACP-binding region spans residues 256 to 260; sequence QANIR. Residue N285 is part of the active site.

It belongs to the thiolase-like superfamily. FabH family. In terms of assembly, homodimer.

It is found in the cytoplasm. It carries out the reaction malonyl-[ACP] + acetyl-CoA + H(+) = 3-oxobutanoyl-[ACP] + CO2 + CoA. Its pathway is lipid metabolism; fatty acid biosynthesis. Functionally, catalyzes the condensation reaction of fatty acid synthesis by the addition to an acyl acceptor of two carbons from malonyl-ACP. Catalyzes the first condensation reaction which initiates fatty acid synthesis and may therefore play a role in governing the total rate of fatty acid production. Possesses both acetoacetyl-ACP synthase and acetyl transacylase activities. Its substrate specificity determines the biosynthesis of branched-chain and/or straight-chain of fatty acids. This chain is Beta-ketoacyl-[acyl-carrier-protein] synthase III, found in Herminiimonas arsenicoxydans.